A 31-amino-acid chain; its full sequence is Cytochrome b6-f complex subunit 6 (31 aa).

Residues 4-26 traverse the membrane as a helical segment; sequence LTSYFGFLLAALTITSALFIGLS.

The protein belongs to the PetL family. As to quaternary structure, the 4 large subunits of the cytochrome b6-f complex are cytochrome b6, subunit IV (17 kDa polypeptide, PetD), cytochrome f and the Rieske protein, while the 4 small subunits are PetG, PetL, PetM and PetN. The complex functions as a dimer.

The protein localises to the plastid. The protein resides in the chloroplast thylakoid membrane. Component of the cytochrome b6-f complex, which mediates electron transfer between photosystem II (PSII) and photosystem I (PSI), cyclic electron flow around PSI, and state transitions. PetL is important for photoautotrophic growth as well as for electron transfer efficiency and stability of the cytochrome b6-f complex. This is Cytochrome b6-f complex subunit 6 from Aethionema grandiflorum (Persian stone-cress).